The primary structure comprises 207 residues: Guanylate kinase (207 aa).

The 179-residue stretch at 7–185 (GIVLVLCAPS…AYDELRAAYI (179 aa)) folds into the Guanylate kinase-like domain. 14 to 21 (APSGTGKT) lines the ATP pocket.

The protein belongs to the guanylate kinase family.

It localises to the cytoplasm. It carries out the reaction GMP + ATP = GDP + ADP. In terms of biological role, essential for recycling GMP and indirectly, cGMP. The polypeptide is Guanylate kinase (Nitratidesulfovibrio vulgaris (strain ATCC 29579 / DSM 644 / CCUG 34227 / NCIMB 8303 / VKM B-1760 / Hildenborough) (Desulfovibrio vulgaris)).